We begin with the raw amino-acid sequence, 246 residues long: Ubiquinone biosynthesis O-methyltransferase (246 aa).

S-adenosyl-L-methionine is bound by residues Arg-36, Gly-60, Asp-81, and Leu-123.

Belongs to the methyltransferase superfamily. UbiG/COQ3 family.

It carries out the reaction a 3-demethylubiquinol + S-adenosyl-L-methionine = a ubiquinol + S-adenosyl-L-homocysteine + H(+). The catalysed reaction is a 3-(all-trans-polyprenyl)benzene-1,2-diol + S-adenosyl-L-methionine = a 2-methoxy-6-(all-trans-polyprenyl)phenol + S-adenosyl-L-homocysteine + H(+). It participates in cofactor biosynthesis; ubiquinone biosynthesis. Its function is as follows. O-methyltransferase that catalyzes the 2 O-methylation steps in the ubiquinone biosynthetic pathway. The protein is Ubiquinone biosynthesis O-methyltransferase of Rickettsia typhi (strain ATCC VR-144 / Wilmington).